Reading from the N-terminus, the 430-residue chain is V-type ATP synthase beta chain 1 (430 aa).

It belongs to the ATPase alpha/beta chains family.

Functionally, produces ATP from ADP in the presence of a proton gradient across the membrane. The V-type beta chain is a regulatory subunit. The polypeptide is V-type ATP synthase beta chain 1 (atpB1) (Treponema pallidum (strain Nichols)).